Here is a 554-residue protein sequence, read N- to C-terminus: Raftlin (554 aa).

G2 carries the N-myristoyl glycine lipid modification. C3 is lipidated: S-palmitoyl cysteine. S183 and S199 each carry phosphoserine. 3 disordered regions span residues 192-249, 441-488, and 504-554; these read CTLG…NEAG, KKRE…DQFS, and GRAS…TEAN. 2 stretches are compositionally biased toward basic and acidic residues: residues 198-209 and 475-487; these read SSLENDTPKAAE and QAEE…EDQF. A phosphoserine mark is found at S507 and S530. Positions 526–542 are enriched in basic and acidic residues; sequence HNRDSVALRHSNPRAEA.

Belongs to the raftlin family. As to quaternary structure, interacts with TLR4; the interaction occurs in response to lipopolysaccharide stimulation. Interacts with CLTC; the interaction occurs in response to pathogens. Interacts with AP2A1 and AP2B1. Expressed in T-cells, B-cells, thymus and spleen (at protein level). Expressed in dendritic cells, macrophages, heart, lung and small intestine.

The protein resides in the cell membrane. Its subcellular location is the cytoplasm. It localises to the membrane raft. It is found in the endosome. The protein localises to the early endosome. In terms of biological role, involved in protein trafficking via association with clathrin and AP2 complex. Upon bacterial lipopolysaccharide stimulation, mediates internalization of TLR4 to endosomes in dendritic cells and macrophages, and internalization of poly(I:C) to TLR3-positive endosomes in myeloid dendritic cells and epithelial cells; resulting in activation of TICAM1-mediated signaling and subsequent IFNB1 production. Involved in T-cell antigen receptor-mediated signaling by regulating tyrosine kinase LCK localization, T-cell dependent antibody production and cytokine secretion. May regulate B-cell antigen receptor-mediated signaling. May play a pivotal role in the formation and/or maintenance of lipid rafts. The sequence is that of Raftlin (Rftn1) from Mus musculus (Mouse).